The chain runs to 253 residues: Small ribosomal subunit protein uS3 (253 aa).

Positions 39–109 constitute a KH type-2 domain; sequence IRNYVLARLK…EVKIDVVEVI (71 aa). Residues 220-253 form a disordered region; sequence DEMKKMKDRRNDGGAKGRDSRDNRSKRRSRSKRS. The segment covering 221-242 has biased composition (basic and acidic residues); the sequence is EMKKMKDRRNDGGAKGRDSRDN. The span at 243-253 shows a compositional bias: basic residues; it reads RSKRRSRSKRS.

The protein belongs to the universal ribosomal protein uS3 family. Part of the 30S ribosomal subunit. Forms a tight complex with proteins S10 and S14.

Its function is as follows. Binds the lower part of the 30S subunit head. Binds mRNA in the 70S ribosome, positioning it for translation. The protein is Small ribosomal subunit protein uS3 of Chlorobium chlorochromatii (strain CaD3).